The sequence spans 562 residues: 2-hydroxyisobutanoyl-CoA mutase large subunit (562 aa).

(3S)-3-hydroxybutanoyl-CoA is bound by residues 76–79, 86–88, aspartate 117, 196–198, arginine 235, asparagine 240, histidine 245, and arginine 284; these read YPTM, TMR, and TVQ.

The protein belongs to the acyl-CoA mutase large subunit family. As to quaternary structure, homotetramer composed of two large substrate-binding subunits (HcmA) and two small cobalamin-binding subunits (HcmB).

The catalysed reaction is 2-hydroxyisobutanoyl-CoA = (3S)-3-hydroxybutanoyl-CoA. In terms of biological role, together with HcmB, catalyzes the isomerization of 2-hydroxyisobutyryl-CoA and 3-hydroxybutyryl-CoA. Is specific for 2-hydroxyisobutyryl-CoA and (S)-3-hydroxybutyryl-CoA, and shows only very low activity with (R)-3-hydroxybutyryl-CoA, isobutyryl-CoA and butyryl-CoA. In vitro, can isomerize pivalyl-CoA and isovaleryl-CoA, with much lower efficiency. Plays a central role in the degradation of substrates bearing a tert-butyl moiety, such as the fuel oxygenate methyl tert-butyl ether (MTBE) and its metabolites. The sequence is that of 2-hydroxyisobutanoyl-CoA mutase large subunit from Aquincola tertiaricarbonis.